We begin with the raw amino-acid sequence, 269 residues long: Phosphatidylglycerol--prolipoprotein diacylglyceryl transferase (269 aa).

4 helical membrane passes run 14–34 (IVQI…AGII), 49–69 (VAPE…IPMA), 89–109 (VFAI…GLLA), and 118–138 (GYSL…GQAI). Arg-140 serves as a coordination point for a 1,2-diacyl-sn-glycero-3-phospho-(1'-sn-glycerol). Helical transmembrane passes span 180–200 (TFLY…FVFF), 208–228 (GSIA…IEGL), and 240–260 (TAQL…WWLN).

It belongs to the Lgt family.

The protein localises to the cell inner membrane. The catalysed reaction is L-cysteinyl-[prolipoprotein] + a 1,2-diacyl-sn-glycero-3-phospho-(1'-sn-glycerol) = an S-1,2-diacyl-sn-glyceryl-L-cysteinyl-[prolipoprotein] + sn-glycerol 1-phosphate + H(+). It functions in the pathway protein modification; lipoprotein biosynthesis (diacylglyceryl transfer). Functionally, catalyzes the transfer of the diacylglyceryl group from phosphatidylglycerol to the sulfhydryl group of the N-terminal cysteine of a prolipoprotein, the first step in the formation of mature lipoproteins. The polypeptide is Phosphatidylglycerol--prolipoprotein diacylglyceryl transferase (Gloeobacter violaceus (strain ATCC 29082 / PCC 7421)).